A 345-amino-acid polypeptide reads, in one-letter code: Methionine import ATP-binding protein MetN 4 (345 aa).

In terms of domain architecture, ABC transporter spans 2-241 (IELTNITKTF…PQLRTTKRFV (240 aa)). 38 to 45 (GYSGAGKS) provides a ligand contact to ATP.

This sequence belongs to the ABC transporter superfamily. Methionine importer (TC 3.A.1.24) family. The complex is composed of two ATP-binding proteins (MetN), two transmembrane proteins (MetI) and a solute-binding protein (MetQ).

The protein localises to the cell membrane. The catalysed reaction is L-methionine(out) + ATP + H2O = L-methionine(in) + ADP + phosphate + H(+). The enzyme catalyses D-methionine(out) + ATP + H2O = D-methionine(in) + ADP + phosphate + H(+). Its function is as follows. Part of the ABC transporter complex MetNIQ involved in methionine import. Responsible for energy coupling to the transport system. This chain is Methionine import ATP-binding protein MetN 4, found in Oceanobacillus iheyensis (strain DSM 14371 / CIP 107618 / JCM 11309 / KCTC 3954 / HTE831).